We begin with the raw amino-acid sequence, 85 residues long: Small ribosomal subunit protein uS17 (85 aa).

The protein belongs to the universal ribosomal protein uS17 family. As to quaternary structure, part of the 30S ribosomal subunit.

Functionally, one of the primary rRNA binding proteins, it binds specifically to the 5'-end of 16S ribosomal RNA. This chain is Small ribosomal subunit protein uS17, found in Trichlorobacter lovleyi (strain ATCC BAA-1151 / DSM 17278 / SZ) (Geobacter lovleyi).